We begin with the raw amino-acid sequence, 484 residues long: UDP-N-acetylmuramoyl-L-alanyl-D-glutamate--L-lysine ligase (484 aa).

A UDP-N-acetyl-alpha-D-muramoyl-L-alanyl-D-glutamate-binding site is contributed by Ser-43. 119-125 (GTKGKTT) lines the ATP pocket. UDP-N-acetyl-alpha-D-muramoyl-L-alanyl-D-glutamate-binding positions include 161–162 (TT), Ser-188, and Arg-196. Lys-230 carries the post-translational modification N6-carboxylysine. The L-lysine recognition motif signature appears at 405-408 (DDPN).

The protein belongs to the MurCDEF family. MurE subfamily. Post-translationally, carboxylation is probably crucial for Mg(2+) binding and, consequently, for the gamma-phosphate positioning of ATP.

It localises to the cytoplasm. The enzyme catalyses UDP-N-acetyl-alpha-D-muramoyl-L-alanyl-D-glutamate + L-lysine + ATP = UDP-N-acetyl-alpha-D-muramoyl-L-alanyl-gamma-D-glutamyl-L-lysine + ADP + phosphate + H(+). It functions in the pathway cell wall biogenesis; peptidoglycan biosynthesis. Functionally, catalyzes the addition of L-lysine to the nucleotide precursor UDP-N-acetylmuramoyl-L-alanyl-D-glutamate (UMAG) in the biosynthesis of bacterial cell-wall peptidoglycan. This is UDP-N-acetylmuramoyl-L-alanyl-D-glutamate--L-lysine ligase from Streptococcus agalactiae serotype Ia (strain ATCC 27591 / A909 / CDC SS700).